An 81-amino-acid chain; its full sequence is Acyl carrier protein (81 aa).

Residues 1–79 (MDREEILQKI…EAVDYVVEHQ (79 aa)) enclose the Carrier domain. O-(pantetheine 4'-phosphoryl)serine is present on serine 39.

It belongs to the acyl carrier protein (ACP) family. Post-translationally, 4'-phosphopantetheine is transferred from CoA to a specific serine of apo-ACP by AcpS. This modification is essential for activity because fatty acids are bound in thioester linkage to the sulfhydryl of the prosthetic group.

The protein resides in the cytoplasm. It functions in the pathway lipid metabolism; fatty acid biosynthesis. In terms of biological role, carrier of the growing fatty acid chain in fatty acid biosynthesis. This Rubrobacter xylanophilus (strain DSM 9941 / JCM 11954 / NBRC 16129 / PRD-1) protein is Acyl carrier protein.